The primary structure comprises 366 residues: MSGNTLGTLFTVTTFGESHGPAIGCVIDGCPPGMGLTEADIQFELDRRKPGTSRHVTQRQEADEVEILSGVFEGVTTGTPIALLIRNTDQRSKDYGNIVETFRPGHADYTYWQKYGIRDYRGGGRSSARLTAPIVGAGAVAKKWLRERFGVEVRGYMSCLGEVDVPFVDWSHVRENPFFSPNAAIVPELEAYMDALRKDGDSIGARIDVVASGVPVGWGEPVFDRLDADIAKAMMSINAVKGVEIGAGFDSVAQRGSVHGDELTPAGFVGNHAGGVLGGISTGQDITVSIAIKPTSSIRTPRRSITKAGEEATVETFGRHDPCVGIRATPIAESMLALVLIDHALRHRAQCGDVETSTPKIAGSAT.

NADP(+)-binding residues include Arg48 and Arg54. FMN is bound by residues 125 to 127 (RSS), 238 to 239 (NA), Gly278, 293 to 297 (KPTSS), and Arg319.

This sequence belongs to the chorismate synthase family. In terms of assembly, homotetramer. FMNH2 is required as a cofactor.

It catalyses the reaction 5-O-(1-carboxyvinyl)-3-phosphoshikimate = chorismate + phosphate. Its pathway is metabolic intermediate biosynthesis; chorismate biosynthesis; chorismate from D-erythrose 4-phosphate and phosphoenolpyruvate: step 7/7. Catalyzes the anti-1,4-elimination of the C-3 phosphate and the C-6 proR hydrogen from 5-enolpyruvylshikimate-3-phosphate (EPSP) to yield chorismate, which is the branch point compound that serves as the starting substrate for the three terminal pathways of aromatic amino acid biosynthesis. This reaction introduces a second double bond into the aromatic ring system. This is Chorismate synthase from Burkholderia ambifaria (strain ATCC BAA-244 / DSM 16087 / CCUG 44356 / LMG 19182 / AMMD) (Burkholderia cepacia (strain AMMD)).